Here is a 64-residue protein sequence, read N- to C-terminus: MPGIRVKEGESIESALKRFKKATEKAGILSEIRKREHYEKPSVKRKKKALAAKKRAVKKARKSF.

Residues 39–64 (EKPSVKRKKKALAAKKRAVKKARKSF) form a disordered region. A compositionally biased stretch (basic residues) spans 43 to 64 (VKRKKKALAAKKRAVKKARKSF).

This sequence belongs to the bacterial ribosomal protein bS21 family.

In Myxococcus xanthus, this protein is Small ribosomal subunit protein bS21 (rpsU).